The sequence spans 227 residues: UPF0173 metal-dependent hydrolase BCG9842_B0515 (227 aa).

It belongs to the UPF0173 family.

The protein is UPF0173 metal-dependent hydrolase BCG9842_B0515 of Bacillus cereus (strain G9842).